An 87-amino-acid chain; its full sequence is Small ribosomal subunit protein bS20 (87 aa).

Residues Met1–Ser26 form a disordered region.

The protein belongs to the bacterial ribosomal protein bS20 family.

Its function is as follows. Binds directly to 16S ribosomal RNA. This Yersinia enterocolitica serotype O:8 / biotype 1B (strain NCTC 13174 / 8081) protein is Small ribosomal subunit protein bS20.